Reading from the N-terminus, the 332-residue chain is D-glutamate N-acetyltransferase (332 aa).

It belongs to the N-acetyltransferase DgcN family.

It catalyses the reaction D-glutamate + acetyl-CoA = N-acetyl-D-glutamate + CoA + H(+). It carries out the reaction D-aspartate + acetyl-CoA = N-acetyl-D-aspartate + CoA + H(+). The catalysed reaction is D-glutamine + acetyl-CoA = N-acetyl-D-glutamine + CoA + H(+). It functions in the pathway amino-acid degradation. N-acetyltransferase involved in a deamination-independent D-glutamate degradation pathway, named the DgcN-DgcA pathway. Catalyzes the transfer of the acetyl moiety from acetyl-CoA to D-glutamate to generate N-acetyl-D-glutamate. Can also acetylate D-aspartate and D-glutamine, with lower efficiency. Has low activity with D-asparagine. Cannot use succinyl-CoA. The polypeptide is D-glutamate N-acetyltransferase (Pseudoalteromonas sp).